The following is a 117-amino-acid chain: Minor capsid protein VP2 (117 aa).

This sequence belongs to the lagovirus VP2 protein family. In terms of assembly, homooligomer. The portal-like structure consists in 12 copies of VP2. Interacts with capsid protein VP1.

It is found in the virion. It localises to the host cytoplasm. Minor structural protein that forms a portal-like structure at a unique three-fold axis of symmetry, following binding to the host receptor. The channel formed by VP2 may allow the delivery of the viral genome through the host endosomal membrane. The protein is Minor capsid protein VP2 of Oryctolagus cuniculus (Rabbit).